Here is a 483-residue protein sequence, read N- to C-terminus: Sodium/pantothenate symporter (483 aa).

The Periplasmic segment spans residues 1–2 (MQ). Residues 3 to 23 (LEVILPLVAYLVVVFGISVYA) traverse the membrane as a helical segment. The Cytoplasmic portion of the chain corresponds to 24–42 (MRKRSTGTFLNEYFLGSRS). A helical transmembrane segment spans residues 43–63 (MGGIVLAMTLTATYISASSFI). Over 64–73 (GGPGAAYKYG) the chain is Periplasmic. The chain crosses the membrane as a helical span at residues 74-94 (LGWVLLAMIQLPAVWLSLGIL). The Cytoplasmic portion of the chain corresponds to 95 to 123 (GKKFAILARRYNAVTLNDMLFARYQSRLL). Residues 124 to 144 (VWLASLSLLVAFVGAMTVQFI) form a helical membrane-spanning segment. Topologically, residues 145 to 157 (GGARLLETAAGIP) are periplasmic. Residues 158 to 178 (YETGLLIFGISIALYTAFGGF) traverse the membrane as a helical segment. The Cytoplasmic segment spans residues 179–189 (RASVLNDTMQG). The chain crosses the membrane as a helical span at residues 190-210 (LVMLIGTVVLLIGVVHAAGGL). The Periplasmic portion of the chain corresponds to 211-232 (SNAVQTLQTIDPQLVTPQGADD). The chain crosses the membrane as a helical span at residues 233–253 (ILSPAFMTSFWVLVCFGVIGL). Residues 254–272 (PHTAVRCISYKDSKAVHRG) lie on the Cytoplasmic side of the membrane. A helical transmembrane segment spans residues 273-293 (IIIGTIVVAILMFGMHLAGAL). Residues 294-305 (GRAVIPDLTVPD) are Periplasmic-facing. The chain crosses the membrane as a helical span at residues 306–326 (LVIPTLMVKVLPPFAAGIFLA). The Cytoplasmic segment spans residues 327-368 (APMAAIMSTINAQLLQSSATIIKDLYLNIRPDQMQNETRLKR). A helical membrane pass occupies residues 369–389 (MSAVITLVLGALLLLAAWKPP). Residues 390 to 391 (EM) lie on the Periplasmic side of the membrane. A helical transmembrane segment spans residues 392–412 (IIWLNLLAFGGLEAVFLWPLV). The Cytoplasmic segment spans residues 413 to 423 (LGLYWERANAK). A helical transmembrane segment spans residues 424–444 (GALSAMIVGGVLYAVLATLNI). Residue Q445 is a topological domain, periplasmic. The helical transmembrane segment at 446–466 (YLGFHPIVPSLLLSLLAFLVG) threads the bilayer. Topologically, residues 467 to 483 (NRFGTSVPQATVLTTDK) are cytoplasmic.

It belongs to the sodium:solute symporter (SSF) (TC 2.A.21) family.

It is found in the cell inner membrane. It catalyses the reaction (R)-pantothenate(in) + Na(+)(in) = (R)-pantothenate(out) + Na(+)(out). Pantothenate uptake is not reduced in osmotically shocked cells or by ATP depletion with arsenate, but is reduced greater than 90% by the dissipation of the membrane electrochemical gradient with 2,4-dinitrophenol. Its function is as follows. Catalyzes the sodium-dependent uptake of extracellular pantothenate. In Escherichia coli (strain K12), this protein is Sodium/pantothenate symporter.